The chain runs to 460 residues: A-type ATP synthase subunit B (460 aa).

Belongs to the ATPase alpha/beta chains family. As to quaternary structure, has multiple subunits, A(3), B(3), C, D, E, F, G, I and K(x); there may be a few other subunits as well.

Its subcellular location is the cell membrane. Its function is as follows. Component of the A-type ATP synthase that produces ATP from ADP in the presence of a proton gradient across the membrane. The B chain is a regulatory subunit. In Methanosarcina mazei (strain ATCC BAA-159 / DSM 3647 / Goe1 / Go1 / JCM 11833 / OCM 88) (Methanosarcina frisia), this protein is A-type ATP synthase subunit B.